Consider the following 326-residue polypeptide: L-lactate dehydrogenase (326 aa).

Residues V26, D47, K52, Y78, and 92-93 (GA) contribute to the NAD(+) site. Residues Q95 and R101 each contribute to the substrate site. NAD(+) is bound by residues T114, 131 to 133 (ASN), and S156. Position 133–136 (133–136 (NPVD)) interacts with substrate. 161–164 (DTAR) lines the substrate pocket. Beta-D-fructose 1,6-bisphosphate is bound by residues R166 and H181. Residue H188 is the Proton acceptor of the active site. Y233 is subject to Phosphotyrosine. T242 serves as a coordination point for substrate.

This sequence belongs to the LDH/MDH superfamily. LDH family. Homotetramer.

Its subcellular location is the cytoplasm. The catalysed reaction is (S)-lactate + NAD(+) = pyruvate + NADH + H(+). The protein operates within fermentation; pyruvate fermentation to lactate; (S)-lactate from pyruvate: step 1/1. Allosterically activated by fructose 1,6-bisphosphate (FBP). In terms of biological role, catalyzes the conversion of lactate to pyruvate. The protein is L-lactate dehydrogenase of Corynebacterium jeikeium (strain K411).